We begin with the raw amino-acid sequence, 493 residues long: Cytoplasmic tRNA 2-thiolation protein 2 (493 aa).

Position 489 is a phosphoserine (Ser-489).

This sequence belongs to the CTU2/NCS2 family. As to quaternary structure, interacts with NCS6 and URM1. May act by forming a heterodimer with NCS6.

Its subcellular location is the cytoplasm. It participates in tRNA modification; 5-methoxycarbonylmethyl-2-thiouridine-tRNA biosynthesis. Functionally, plays a central role in 2-thiolation of mcm(5)S(2)U at tRNA wobble positions of tRNA(Lys), tRNA(Glu) and tRNA(Gln). May act by forming a heterodimer with NCS6 that ligates sulfur from thiocarboxylated URM1 onto the uridine of tRNAs at wobble position. Prior mcm(5) tRNA modification by the elongator complex is required for 2-thiolation. May also be involved in protein urmylation. The protein is Cytoplasmic tRNA 2-thiolation protein 2 of Saccharomyces cerevisiae (strain AWRI1631) (Baker's yeast).